A 642-amino-acid chain; its full sequence is Threonine--tRNA ligase (642 aa).

A TGS domain is found at 1 to 61 (MPVITLPDGS…ETDAELSIIT (61 aa)). Positions 243-534 (DHRKIGKQLD…LIEEYAGRFP (292 aa)) are catalytic. Cys334, His385, and His511 together coordinate Zn(2+).

The protein belongs to the class-II aminoacyl-tRNA synthetase family. Homodimer. Zn(2+) serves as cofactor.

Its subcellular location is the cytoplasm. It carries out the reaction tRNA(Thr) + L-threonine + ATP = L-threonyl-tRNA(Thr) + AMP + diphosphate + H(+). In terms of biological role, catalyzes the attachment of threonine to tRNA(Thr) in a two-step reaction: L-threonine is first activated by ATP to form Thr-AMP and then transferred to the acceptor end of tRNA(Thr). Also edits incorrectly charged L-seryl-tRNA(Thr). The polypeptide is Threonine--tRNA ligase (Shewanella putrefaciens (strain CN-32 / ATCC BAA-453)).